The primary structure comprises 192 residues: Phosphoheptose isomerase (192 aa).

The SIS domain occupies 37-192 (IAASLRDGGK…IMLIEKELAV (156 aa)). 52–54 (NGG) contacts substrate. Zn(2+)-binding residues include H61 and E65. Substrate-binding positions include E65, 93–94 (ND), 119–121 (STS), S124, and Q172. Q172 and H180 together coordinate Zn(2+).

It belongs to the SIS family. GmhA subfamily. Homotetramer. It depends on Zn(2+) as a cofactor.

Its subcellular location is the cytoplasm. It catalyses the reaction 2 D-sedoheptulose 7-phosphate = D-glycero-alpha-D-manno-heptose 7-phosphate + D-glycero-beta-D-manno-heptose 7-phosphate. Its pathway is carbohydrate biosynthesis; D-glycero-D-manno-heptose 7-phosphate biosynthesis; D-glycero-alpha-D-manno-heptose 7-phosphate and D-glycero-beta-D-manno-heptose 7-phosphate from sedoheptulose 7-phosphate: step 1/1. In terms of biological role, catalyzes the isomerization of sedoheptulose 7-phosphate in D-glycero-D-manno-heptose 7-phosphate. In Tolumonas auensis (strain DSM 9187 / NBRC 110442 / TA 4), this protein is Phosphoheptose isomerase.